Reading from the N-terminus, the 503-residue chain is Carboxyl-terminal PDZ ligand of neuronal nitric oxide synthase protein (503 aa).

Residues 26–191 (FQHGISFEAK…ESERNSDGSG (166 aa)) form the PID domain. The interval 170-212 (HTQQNADGQEDGESERNSDGSGDPGRQLTGAERVSTATAEETD) is disordered. A phosphoserine mark is found at Ser183, Ser187, Ser190, and Ser262. The disordered stretch occupies residues 266 to 285 (LLPSSSSSKPPGLGTGTPLS). A coiled-coil region spans residues 319–360 (AAEAAARLEAQARVHQLLLQNKDMLQHISLLVKQVQELELKL). Phosphoserine is present on residues Ser368, Ser371, Ser398, and Ser414. The interaction with NOS1 stretch occupies residues 491–503 (QELGDSLDDEIAV). The PDZ-binding signature appears at 501–503 (IAV).

In terms of assembly, interacts with the PDZ domain of NOS1 or the second PDZ domain of DLG4 through its C-terminus. Interacts with RASD1 and SYN1, SYN2 and SYN3 via its PID domain. Forms a ternary complex with NOS1 and RASD1. Forms a ternary complex with NOS1 and SYN1. Mainly expressed in brain. Highly expressed in accessory olfactory bulb, caudate-putamen, cerebellum, cerebral cortex, dentate gyrus of the hippocampus, islands of Calleja, olfactory bulb and supraoptic nucleus. Expressed in kidney glomeruli podocytes (at protein level).

The protein resides in the cell projection. It localises to the filopodium. Its subcellular location is the podosome. Functionally, adapter protein involved in neuronal nitric-oxide (NO) synthesis regulation via its association with nNOS/NOS1. The complex formed with NOS1 and synapsins is necessary for specific NO and synapsin functions at a presynaptic level. Mediates an indirect interaction between NOS1 and RASD1 leading to enhance the ability of NOS1 to activate RASD1. Competes with DLG4 for interaction with NOS1, possibly affecting NOS1 activity by regulating the interaction between NOS1 and DLG4. In kidney podocytes, plays a role in podosomes and filopodia formation through CDC42 activation. This is Carboxyl-terminal PDZ ligand of neuronal nitric oxide synthase protein from Rattus norvegicus (Rat).